A 95-amino-acid chain; its full sequence is Small ribosomal subunit protein uS19 (95 aa).

The segment at 76–95 (PTRRFGGHADKKAATKGQVR) is disordered.

It belongs to the universal ribosomal protein uS19 family.

Protein S19 forms a complex with S13 that binds strongly to the 16S ribosomal RNA. The chain is Small ribosomal subunit protein uS19 from Pseudothermotoga lettingae (strain ATCC BAA-301 / DSM 14385 / NBRC 107922 / TMO) (Thermotoga lettingae).